We begin with the raw amino-acid sequence, 140 residues long: Organic hydroperoxide resistance protein-like (140 aa).

This sequence belongs to the OsmC/Ohr family.

The polypeptide is Organic hydroperoxide resistance protein-like (Staphylococcus aureus (strain MRSA252)).